Reading from the N-terminus, the 178-residue chain is MSRIGKQPIAIPAGVEVKLEGNLLKFKKGNLAKELDTKANVNVEIKDNNILFSPKGEDRQSRAYWGTYRALAYNIVVGLTQGFSKTLEINGVGYKAALKGKVLELSLGFSHPINYDIPGGIEIVVDKNTIAVKGSDKQVVGQVAAQIREFRPPEPYKGKGVKYSDERIIRKAGKTSKK.

The protein belongs to the universal ribosomal protein uL6 family. As to quaternary structure, part of the 50S ribosomal subunit.

Its function is as follows. This protein binds to the 23S rRNA, and is important in its secondary structure. It is located near the subunit interface in the base of the L7/L12 stalk, and near the tRNA binding site of the peptidyltransferase center. The polypeptide is Large ribosomal subunit protein uL6 (Campylobacter jejuni subsp. doylei (strain ATCC BAA-1458 / RM4099 / 269.97)).